Reading from the N-terminus, the 62-residue chain is Photosystem II reaction center protein Z (62 aa).

2 helical membrane-spanning segments follow: residues 8–28 (ALFA…VAFA) and 41–61 (FQGV…NSLV).

It belongs to the PsbZ family. PSII is composed of 1 copy each of membrane proteins PsbA, PsbB, PsbC, PsbD, PsbE, PsbF, PsbH, PsbI, PsbJ, PsbK, PsbL, PsbM, PsbT, PsbY, PsbZ, Psb30/Ycf12, at least 3 peripheral proteins of the oxygen-evolving complex and a large number of cofactors. It forms dimeric complexes.

The protein resides in the plastid. It localises to the chloroplast thylakoid membrane. May control the interaction of photosystem II (PSII) cores with the light-harvesting antenna, regulates electron flow through the 2 photosystem reaction centers. PSII is a light-driven water plastoquinone oxidoreductase, using light energy to abstract electrons from H(2)O, generating a proton gradient subsequently used for ATP formation. This chain is Photosystem II reaction center protein Z, found in Nephroselmis olivacea (Green alga).